The primary structure comprises 342 residues: Platelet-activating factor receptor (342 aa).

The Extracellular portion of the chain corresponds to 1–16 (MELNSSSRVDSEFRYT). Residue asparagine 4 is glycosylated (N-linked (GlcNAc...) asparagine). Residues 17-38 (LFPIVYSIIFVLGIIANGYVLW) traverse the membrane as a helical segment. Topologically, residues 39–54 (VFARLYPSKKLNEIKI) are cytoplasmic. A helical transmembrane segment spans residues 55–74 (FMVNLTVADLLFLITLPLWI). The Extracellular segment spans residues 75–91 (VYYSNQGNWFLPKFLCN). Cysteine 90 and cysteine 173 are disulfide-bonded. A helical membrane pass occupies residues 92–113 (LAGCLFFINTYCSVAFLGVITY). At 114-133 (NRFQAVKYPIKTAQATTRKR) the chain is on the cytoplasmic side. Residues 134–155 (GIALSLVIWVAIVAAASYFLVM) form a helical membrane-spanning segment. Residues 156–184 (DSTNVVSNKAGSGNITRCFEHYEKGSKPV) lie on the Extracellular side of the membrane. Asparagine 169 carries an N-linked (GlcNAc...) asparagine glycan. A helical membrane pass occupies residues 185–205 (LIIHICIVLGFFIVFLLILFC). Residues 206–233 (NLVIIHTLLRQPVKQQRNAEVRRRALWM) lie on the Cytoplasmic side of the membrane. Residues 234 to 254 (VCTVLAVFVICFVPHHMVQLP) form a helical membrane-spanning segment. At 255–276 (WTLAELGMWPSSNHQAINDAHQ) the chain is on the extracellular side. Residues 277–296 (VTLCLLSTNCVLDPVIYCFL) traverse the membrane as a helical segment. Residues 297-342 (TKKFRKHLSEKLNIMRSSQKCSRVTTDTGTEMAIPINHTPVNPIKN) are Cytoplasmic-facing.

Belongs to the G-protein coupled receptor 1 family. As to quaternary structure, interacts with ARRB1.

Its subcellular location is the cell membrane. Its function is as follows. Receptor for platelet activating factor, a chemotactic phospholipid mediator that possesses potent inflammatory, smooth-muscle contractile and hypotensive activity. Seems to mediate its action via a G protein that activates a phosphatidylinositol-calcium second messenger system. In Cavia porcellus (Guinea pig), this protein is Platelet-activating factor receptor (PTAFR).